The chain runs to 77 residues: Large ribosomal subunit protein uL29 (77 aa).

The protein belongs to the universal ribosomal protein uL29 family.

This Mycolicibacterium smegmatis (strain ATCC 700084 / mc(2)155) (Mycobacterium smegmatis) protein is Large ribosomal subunit protein uL29.